Consider the following 461-residue polypeptide: Cysteine--tRNA ligase (461 aa).

Cys28 is a Zn(2+) binding site. The short motif at 30–40 (ITVYDLCHIGH) is the 'HIGH' region element. Residues Cys209, His234, and Glu238 each coordinate Zn(2+). The 'KMSKS' region motif lies at 266 to 270 (KMSKS). Lys269 provides a ligand contact to ATP.

Belongs to the class-I aminoacyl-tRNA synthetase family. Monomer. Requires Zn(2+) as cofactor.

The protein localises to the cytoplasm. It catalyses the reaction tRNA(Cys) + L-cysteine + ATP = L-cysteinyl-tRNA(Cys) + AMP + diphosphate. The sequence is that of Cysteine--tRNA ligase from Salmonella agona (strain SL483).